We begin with the raw amino-acid sequence, 296 residues long: Partitioning protein REP2 (296 aa).

An N-acetylmethionine modification is found at Met1. The segment at Met1 to Pro57 is interaction with REP1. A DNA-binding, and self-association region spans residues Met58–Val296. The interval Ser228–Val296 is disordered. Over residues Pro275–Val296 the composition is skewed to basic residues. The tract at residues Thr276–Val296 is nuclear localization.

Interacts with REP1.

Its subcellular location is the nucleus. Functionally, part of the plasmid partitioning system, which ensures the equal distribution of replicated plasmid molecules to daughter cells. The plasmids exist as well-organized plasmid foci within the nucleus that stay together throughout the cell-cycle and act as entity during segregation, effetively reducing copy number to one. Plasmid partitioning requires the proteins REP1, REP2, and a cis-acting locus STB (REP3). REP1-REP2 stably associate with CSE4-containing chromatin at STB during S-phase, marking the locus with a centromeric tag, and thereby probably catching mitotic spindle microtubules to the plasmid cluster and coupling plasmid segregation to chromosome segregation. REP1-REP2 are required to recruit the cohesin complex to the STB locus for pairing of the replicated plasmid cluster, a prerequisite for successful plasmid segregation. REP1-REP2 also negatively regulate expression of site-specific recombinase FLP and of RAF1. This is Partitioning protein REP2 (REP2) from Saccharomyces cerevisiae (strain ATCC 204508 / S288c) (Baker's yeast).